We begin with the raw amino-acid sequence, 256 residues long: Triosephosphate isomerase (256 aa).

Residue 9-11 coordinates substrate; the sequence is NWK. Residue H97 is the Electrophile of the active site. E169 functions as the Proton acceptor in the catalytic mechanism. Substrate is bound by residues G175, S214, and 235 to 236; that span reads GG.

Belongs to the triosephosphate isomerase family. Homodimer.

It localises to the cytoplasm. It carries out the reaction D-glyceraldehyde 3-phosphate = dihydroxyacetone phosphate. Its pathway is carbohydrate biosynthesis; gluconeogenesis. The protein operates within carbohydrate degradation; glycolysis; D-glyceraldehyde 3-phosphate from glycerone phosphate: step 1/1. Involved in the gluconeogenesis. Catalyzes stereospecifically the conversion of dihydroxyacetone phosphate (DHAP) to D-glyceraldehyde-3-phosphate (G3P). The protein is Triosephosphate isomerase of Vibrio vulnificus (strain CMCP6).